Here is a 445-residue protein sequence, read N- to C-terminus: Elongation factor 1-alpha (445 aa).

Residues 5–230 (KVHISLVVIG…DNLEPPKRPS (226 aa)) enclose the tr-type G domain. The tract at residues 14–21 (GHVDSGKS) is G1. 14–21 (GHVDSGKS) is a binding site for GTP. Lys-55 is subject to N6,N6-dimethyllysine. The segment at 70–74 (CITID) is G2. Position 79 is an N6,N6,N6-trimethyllysine (Lys-79). The tract at residues 91–94 (DAPG) is G3. GTP is bound by residues 91–95 (DAPGH) and 153–156 (NKFD). The tract at residues 153-156 (NKFD) is G4. Lys-187 is subject to N6,N6,N6-trimethyllysine. Residues 194-196 (SGW) are G5. Lys-261 carries the post-translational modification N6-methyllysine. An N6,N6,N6-trimethyllysine mark is found at Lys-306 and Lys-396.

The protein belongs to the TRAFAC class translation factor GTPase superfamily. Classic translation factor GTPase family. EF-Tu/EF-1A subfamily.

The protein localises to the cytoplasm. Functionally, this protein promotes the GTP-dependent binding of aminoacyl-tRNA to the A-site of ribosomes during protein biosynthesis. In Euglena gracilis, this protein is Elongation factor 1-alpha (TEF).